A 238-amino-acid polypeptide reads, in one-letter code: Zinc import ATP-binding protein ZnuC (238 aa).

An ABC transporter domain is found at V5–K220. An ATP-binding site is contributed by G37–S44.

It belongs to the ABC transporter superfamily. Zinc importer (TC 3.A.1.15.5) family. In terms of assembly, the complex is composed of two ATP-binding proteins (ZnuC), two transmembrane proteins (ZnuB) and a solute-binding protein (ZnuA).

It localises to the cell inner membrane. It catalyses the reaction Zn(2+)(out) + ATP(in) + H2O(in) = Zn(2+)(in) + ADP(in) + phosphate(in) + H(+)(in). Functionally, part of the ABC transporter complex ZnuABC involved in zinc import. Responsible for energy coupling to the transport system. The polypeptide is Zinc import ATP-binding protein ZnuC (Buchnera aphidicola subsp. Acyrthosiphon pisum (strain APS) (Acyrthosiphon pisum symbiotic bacterium)).